A 518-amino-acid polypeptide reads, in one-letter code: Probable portal protein (518 aa).

A disordered region spans residues 492 to 518; it reads KALQANGVTHVEPDEEDDDEPNATGTD.

It belongs to the siphoviridae portal protein family. As to quaternary structure, homododecamer. Interacts with the terminase complex composed of two small and one large terminase subunits.

It localises to the virion. In terms of biological role, forms the portal vertex of the capsid. This portal plays critical roles in head assembly, genome packaging, neck/tail attachment, and genome ejection. The portal protein multimerizes as a single ring-shaped homododecamer arranged around a central channel. Binds to the terminase subunits to form the packaging machine. This is Probable portal protein from Vreelandella aquamarina (Bacteriophage phiHAP-1).